The chain runs to 409 residues: Lissencephaly-1 homolog (409 aa).

One can recognise a LisH domain in the interval Gln7–Gly39. The stretch at Thr54–Gly80 forms a coiled coil. The tract at residues Glu72–Arg95 is disordered. WD repeat units lie at residues Gly104–Lys145, Gly146–His187, Gly188–Gln229, His231–Asp269, Asp272–Thr332, Gly335–Thr374, and Ala377–Arg409.

The protein belongs to the WD repeat LIS1/nudF family.

The protein localises to the cytoplasm. It is found in the cytoskeleton. It localises to the microtubule organizing center. The protein resides in the centrosome. In terms of biological role, positively regulates the activity of the minus-end directed microtubule motor protein dynein. May enhance dynein-mediated microtubule sliding by targeting dynein to the microtubule plus end. Required for several dynein- and microtubule-dependent processes. The sequence is that of Lissencephaly-1 homolog from Nematostella vectensis (Starlet sea anemone).